We begin with the raw amino-acid sequence, 126 residues long: Fatty acid-binding protein 2, liver (126 aa).

Cholate is bound by residues 54–56 (TPN), 99–101 (HIQ), and Arg-121.

Belongs to the calycin superfamily. Fatty-acid binding protein (FABP) family.

The protein localises to the cytoplasm. In terms of biological role, binds free fatty acids and their coenzyme A derivatives, bilirubin, and some other small molecules in the cytoplasm. May be involved in intracellular lipid transport. The specificity of axolotl L-FABP differs from that of LB-FABP. Binds 2 ligands per protein molecule. The polypeptide is Fatty acid-binding protein 2, liver (Ambystoma mexicanum (Axolotl)).